The chain runs to 157 residues: uncharacterized protein (157 aa).

This is an uncharacterized protein from Bacillus subtilis (strain 168).